Reading from the N-terminus, the 640-residue chain is Glutamyl-tRNA(Gln) amidotransferase subunit E (640 aa).

The protein belongs to the GatB/GatE family. GatE subfamily. As to quaternary structure, heterodimer of GatD and GatE.

It carries out the reaction L-glutamyl-tRNA(Gln) + L-glutamine + ATP + H2O = L-glutaminyl-tRNA(Gln) + L-glutamate + ADP + phosphate + H(+). Allows the formation of correctly charged Gln-tRNA(Gln) through the transamidation of misacylated Glu-tRNA(Gln) in organisms which lack glutaminyl-tRNA synthetase. The reaction takes place in the presence of glutamine and ATP through an activated gamma-phospho-Glu-tRNA(Gln). The GatDE system is specific for glutamate and does not act on aspartate. This Methanopyrus kandleri (strain AV19 / DSM 6324 / JCM 9639 / NBRC 100938) protein is Glutamyl-tRNA(Gln) amidotransferase subunit E.